The chain runs to 229 residues: Flagellar L-ring protein (229 aa).

A signal peptide spans 1–25 (MKQVRLPSSATVRAACAVAVAALAG). The N-palmitoyl cysteine moiety is linked to residue Cys26. A lipid anchor (S-diacylglycerol cysteine) is attached at Cys26.

It belongs to the FlgH family. As to quaternary structure, the basal body constitutes a major portion of the flagellar organelle and consists of four rings (L,P,S, and M) mounted on a central rod.

The protein localises to the cell outer membrane. It is found in the bacterial flagellum basal body. Its function is as follows. Assembles around the rod to form the L-ring and probably protects the motor/basal body from shearing forces during rotation. The protein is Flagellar L-ring protein of Burkholderia cenocepacia (strain ATCC BAA-245 / DSM 16553 / LMG 16656 / NCTC 13227 / J2315 / CF5610) (Burkholderia cepacia (strain J2315)).